We begin with the raw amino-acid sequence, 203 residues long: 3-isopropylmalate dehydratase small subunit (203 aa).

The protein belongs to the LeuD family. LeuD type 1 subfamily. As to quaternary structure, heterodimer of LeuC and LeuD.

The catalysed reaction is (2R,3S)-3-isopropylmalate = (2S)-2-isopropylmalate. It participates in amino-acid biosynthesis; L-leucine biosynthesis; L-leucine from 3-methyl-2-oxobutanoate: step 2/4. Its function is as follows. Catalyzes the isomerization between 2-isopropylmalate and 3-isopropylmalate, via the formation of 2-isopropylmaleate. The sequence is that of 3-isopropylmalate dehydratase small subunit from Rhodospirillum centenum (strain ATCC 51521 / SW).